Consider the following 178-residue polypeptide: Large ribosomal subunit protein uL6 (178 aa).

Belongs to the universal ribosomal protein uL6 family. In terms of assembly, part of the 50S ribosomal subunit.

This protein binds to the 23S rRNA, and is important in its secondary structure. It is located near the subunit interface in the base of the L7/L12 stalk, and near the tRNA binding site of the peptidyltransferase center. In Buchnera aphidicola subsp. Acyrthosiphon pisum (strain APS) (Acyrthosiphon pisum symbiotic bacterium), this protein is Large ribosomal subunit protein uL6.